We begin with the raw amino-acid sequence, 1377 residues long: DNA-directed RNA polymerase subunit beta' (1377 aa).

Cys60, Cys62, Cys75, and Cys78 together coordinate Zn(2+). Asp449, Asp451, and Asp453 together coordinate Mg(2+). Residues Cys777, Cys851, Cys858, and Cys861 each contribute to the Zn(2+) site.

This sequence belongs to the RNA polymerase beta' chain family. As to quaternary structure, the RNAP catalytic core consists of 2 alpha, 1 beta, 1 beta' and 1 omega subunit. When a sigma factor is associated with the core the holoenzyme is formed, which can initiate transcription. The cofactor is Mg(2+). Zn(2+) serves as cofactor.

The catalysed reaction is RNA(n) + a ribonucleoside 5'-triphosphate = RNA(n+1) + diphosphate. DNA-dependent RNA polymerase catalyzes the transcription of DNA into RNA using the four ribonucleoside triphosphates as substrates. The sequence is that of DNA-directed RNA polymerase subunit beta' from Borrelia recurrentis (strain A1).